Here is a 170-residue protein sequence, read N- to C-terminus: S-ribosylhomocysteine lyase (170 aa).

Residues His54, His58, and Cys128 each coordinate Fe cation.

This sequence belongs to the LuxS family. In terms of assembly, homodimer. It depends on Fe cation as a cofactor.

It carries out the reaction S-(5-deoxy-D-ribos-5-yl)-L-homocysteine = (S)-4,5-dihydroxypentane-2,3-dione + L-homocysteine. Its function is as follows. Involved in the synthesis of autoinducer 2 (AI-2) which is secreted by bacteria and is used to communicate both the cell density and the metabolic potential of the environment. The regulation of gene expression in response to changes in cell density is called quorum sensing. Catalyzes the transformation of S-ribosylhomocysteine (RHC) to homocysteine (HC) and 4,5-dihydroxy-2,3-pentadione (DPD). This is S-ribosylhomocysteine lyase from Marinomonas sp. (strain MWYL1).